A 330-amino-acid chain; its full sequence is Phosphate acyltransferase (330 aa).

It belongs to the PlsX family. As to quaternary structure, homodimer. Probably interacts with PlsY.

The protein resides in the cytoplasm. The catalysed reaction is a fatty acyl-[ACP] + phosphate = an acyl phosphate + holo-[ACP]. It participates in lipid metabolism; phospholipid metabolism. Functionally, catalyzes the reversible formation of acyl-phosphate (acyl-PO(4)) from acyl-[acyl-carrier-protein] (acyl-ACP). This enzyme utilizes acyl-ACP as fatty acyl donor, but not acyl-CoA. The chain is Phosphate acyltransferase from Campylobacter hominis (strain ATCC BAA-381 / DSM 21671 / CCUG 45161 / LMG 19568 / NCTC 13146 / CH001A).